We begin with the raw amino-acid sequence, 156 residues long: Small ribosomal subunit protein uS7 (156 aa).

This sequence belongs to the universal ribosomal protein uS7 family. As to quaternary structure, part of the 30S ribosomal subunit. Contacts proteins S9 and S11.

One of the primary rRNA binding proteins, it binds directly to 16S rRNA where it nucleates assembly of the head domain of the 30S subunit. Is located at the subunit interface close to the decoding center, probably blocks exit of the E-site tRNA. This is Small ribosomal subunit protein uS7 from Geobacter metallireducens (strain ATCC 53774 / DSM 7210 / GS-15).